Consider the following 616-residue polypeptide: Chaperone protein HscA homolog (616 aa).

The protein belongs to the heat shock protein 70 family.

In terms of biological role, chaperone involved in the maturation of iron-sulfur cluster-containing proteins. Has a low intrinsic ATPase activity which is markedly stimulated by HscB. This chain is Chaperone protein HscA homolog, found in Vibrio cholerae serotype O1 (strain M66-2).